The sequence spans 346 residues: GTPase Obg (346 aa).

One can recognise an Obg domain in the interval 1-158; it reads MFVDECVVKL…GTYRLVLKSI (158 aa). The OBG-type G domain maps to 159–332; that stretch reads ADVGLVGFPN…LKKELLKRVT (174 aa). Residues 165-172, 190-194, 216-219, 286-289, and 313-315 each bind GTP; these read GFPNAGKS, FTTLH, DVPG, NKMD, and SCL. Ser-172 and Thr-192 together coordinate Mg(2+).

Belongs to the TRAFAC class OBG-HflX-like GTPase superfamily. OBG GTPase family. In terms of assembly, monomer. The cofactor is Mg(2+).

Its subcellular location is the cytoplasm. In terms of biological role, an essential GTPase which binds GTP, GDP and possibly (p)ppGpp with moderate affinity, with high nucleotide exchange rates and a fairly low GTP hydrolysis rate. Plays a role in control of the cell cycle, stress response, ribosome biogenesis and in those bacteria that undergo differentiation, in morphogenesis control. The protein is GTPase Obg of Opitutus terrae (strain DSM 11246 / JCM 15787 / PB90-1).